The chain runs to 133 residues: Holo-[acyl-carrier-protein] synthase (133 aa).

Aspartate 8 and glutamate 57 together coordinate Mg(2+).

The protein belongs to the P-Pant transferase superfamily. AcpS family. The cofactor is Mg(2+).

The protein resides in the cytoplasm. The enzyme catalyses apo-[ACP] + CoA = holo-[ACP] + adenosine 3',5'-bisphosphate + H(+). Its function is as follows. Transfers the 4'-phosphopantetheine moiety from coenzyme A to a Ser of acyl-carrier-protein. This is Holo-[acyl-carrier-protein] synthase from Bartonella henselae (strain ATCC 49882 / DSM 28221 / CCUG 30454 / Houston 1) (Rochalimaea henselae).